Reading from the N-terminus, the 210-residue chain is UPF0502 protein Sama_1967 (210 aa).

Belongs to the UPF0502 family.

This Shewanella amazonensis (strain ATCC BAA-1098 / SB2B) protein is UPF0502 protein Sama_1967.